Reading from the N-terminus, the 535-residue chain is Ribonuclease Y 2 (535 aa).

Residues 1–21 (MLITGLIIGCLLIGLVIGYVV) traverse the membrane as a helical segment. Positions 207–268 (LEHTVTVPNG…IRREVARVAL (62 aa)) constitute a KH domain. The HD domain maps to 334–427 (VLLHSIEVAQ…VAAADAISGA (94 aa)).

This sequence belongs to the RNase Y family.

The protein resides in the cell membrane. Functionally, endoribonuclease that initiates mRNA decay. This Levilactobacillus brevis (strain ATCC 367 / BCRC 12310 / CIP 105137 / JCM 1170 / LMG 11437 / NCIMB 947 / NCTC 947) (Lactobacillus brevis) protein is Ribonuclease Y 2.